The primary structure comprises 137 residues: MSDIVRFGVSLDNTLLKQFDRFIKDRNYTNRSEAIRDLIRQELLKKEWTEDQEVAGAITYIYDHHQRDLLNKIIDIQHDFHDVIKSTQHIHLDHDNCLEIVAVKGNPTTISKLSNALKAIKGVRHGSLSISGVGQIA.

His78, His89, His91, and Cys97 together coordinate Ni(2+).

The protein belongs to the transcriptional regulatory CopG/NikR family. Requires Ni(2+) as cofactor.

Transcriptional regulator. The chain is Putative nickel-responsive regulator from Syntrophus aciditrophicus (strain SB).